The following is a 78-amino-acid chain: Defensin-like protein 74 (78 aa).

Positions 1–28 are cleaved as a signal peptide; that stretch reads MNYKIGIMSLLVITSIIFLFLVPDKVEA. Disulfide bonds link Cys32–Cys73, Cys36–Cys58, Cys42–Cys71, and Cys46–Cys72.

The protein belongs to the DEFL family.

The protein localises to the secreted. The polypeptide is Defensin-like protein 74 (LCR43) (Arabidopsis thaliana (Mouse-ear cress)).